We begin with the raw amino-acid sequence, 549 residues long: Glucose-6-phosphate isomerase (549 aa).

Residue E355 is the Proton donor of the active site. Active-site residues include H386 and K514.

The protein belongs to the GPI family.

The protein localises to the cytoplasm. The enzyme catalyses alpha-D-glucose 6-phosphate = beta-D-fructose 6-phosphate. The protein operates within carbohydrate biosynthesis; gluconeogenesis. Its pathway is carbohydrate degradation; glycolysis; D-glyceraldehyde 3-phosphate and glycerone phosphate from D-glucose: step 2/4. Catalyzes the reversible isomerization of glucose-6-phosphate to fructose-6-phosphate. The chain is Glucose-6-phosphate isomerase from Salmonella paratyphi B (strain ATCC BAA-1250 / SPB7).